We begin with the raw amino-acid sequence, 984 residues long: MYCBP-associated protein (984 aa).

Disordered stretches follow at residues 61 to 88 (LEAS…EEPE) and 218 to 240 (GESK…PQHN). Basic and acidic residues predominate over residues 218–231 (GESKQKAPKEEKRP). A Phosphothreonine modification is found at Thr613. Phosphoserine is present on Ser619. Disordered stretches follow at residues 693-729 (SPIS…KSIM) and 842-917 (PEEQ…ASQD). The span at 862–910 (AGKEERKGAAQEKKQLGIKDKEDKKGAKLLGKEDRPNSKKHKAKDDKKV) shows a compositional bias: basic and acidic residues.

Interacts with MYCBP. Expressed specifically in testis.

It localises to the cytoplasm. The protein resides in the membrane. In terms of biological role, may play a role in spermatogenesis. May be involved in synaptic processes. The protein is MYCBP-associated protein of Homo sapiens (Human).